Here is a 453-residue protein sequence, read N- to C-terminus: Fibrinogen gamma chain (453 aa).

Positions 1–26 (MSWSLHPRNLILYFYALLFLSSTCVA) are cleaved as a signal peptide. Residue S68 is modified to Phosphoserine; by FAM20C. The N-linked (GlcNAc...) (complex) asparagine glycan is linked to N78. Positions 170–416 (QIHDITGKDC…KTTMKIIPFN (247 aa)) constitute a Fibrinogen C-terminal domain. The cysteines at positions 179 and 208 are disulfide-linked. N334 carries N-linked (GlcNAc...) asparagine; in variant Asahi glycosylation. Ca(2+) contacts are provided by D344, D346, F348, and G350. Cysteines 352 and 365 form a disulfide. Residues 400 to 422 (TRWYSMKKTTMKIIPFNRLTIGE) are gamma-chain polymerization, binding amino end of another fibrin alpha chain. Residues 423 to 437 (GQQHHLGGAKQVRPE) form a platelet aggregation and Staphylococcus clumping region. An Isoglutamyl lysine isopeptide (Gln-Lys) (interchain with K-432) cross-link involves residue Q424. A disordered region spans residues 424 to 453 (QQHHLGGAKQVRPEHPAETEYDSLYPEDDL). Residue K432 forms an Isoglutamyl lysine isopeptide (Lys-Gln) (interchain with Q-424) linkage. Residues 442 to 453 (TEYDSLYPEDDL) show a composition bias toward acidic residues. Residues Y444 and Y448 each carry the sulfotyrosine modification.

In terms of assembly, heterohexamer; disulfide linked. Contains 2 sets of 3 non-identical chains (alpha, beta and gamma). The 2 heterotrimers are in head to head conformation with the N-termini in a small central domain. Conversion of fibrinogen to fibrin is triggered by thrombin, which cleaves fibrinopeptides A and B from alpha and beta chains, and thus exposes the N-terminal polymerization sites responsible for the formation of the soft clot. The soft clot is converted into the hard clot by factor XIIIA which catalyzes the epsilon-(gamma-glutamyl)lysine cross-linking between gamma chains (stronger) and between alpha chains (weaker) of different monomers. In terms of processing, sulfation of C-terminal tyrosines increases affinity for thrombin. In terms of tissue distribution, detected in blood plasma (at protein level).

Its subcellular location is the secreted. Its function is as follows. Together with fibrinogen alpha (FGA) and fibrinogen beta (FGB), polymerizes to form an insoluble fibrin matrix. Has a major function in hemostasis as one of the primary components of blood clots. In addition, functions during the early stages of wound repair to stabilize the lesion and guide cell migration during re-epithelialization. Was originally thought to be essential for platelet aggregation, based on in vitro studies using anticoagulated blood. However, subsequent studies have shown that it is not absolutely required for thrombus formation in vivo. Enhances expression of SELP in activated platelets via an ITGB3-dependent pathway. Maternal fibrinogen is essential for successful pregnancy. Fibrin deposition is also associated with infection, where it protects against IFNG-mediated hemorrhage. May also facilitate the antibacterial immune response via both innate and T-cell mediated pathways. The protein is Fibrinogen gamma chain (FGG) of Homo sapiens (Human).